Consider the following 525-residue polypeptide: NAD(P)H-quinone oxidoreductase chain 4 1 (525 aa).

14 consecutive transmembrane segments (helical) span residues 6 to 26 (FPWLTTIILLPIAASLLIPII), 36 to 56 (WYALIVGLIDFALIVYAFYTS), 91 to 111 (LIILTGFITTLATLAAWPVTL), 115 to 135 (LFYFLLLAMYGGQIAVFAVQD), 136 to 156 (LLLFFLVWELELIPVYLLLAI), 169 to 189 (FILYTAGGSLFILLAALTMAF), 212 to 232 (LLLYAGFLIAYAIKLPIIPLH), 243 to 263 (TAPAHMLLAGILLKMGGYALI), 277 to 297 (FAPVLVVLGVVNIIYAALTSF), 314 to 334 (MGFVIIGFASFTDLGLSGAVL), 335 to 355 (QMVSHGLIGASLFFLVGATYD), 375 to 397 (IFAMFTACSMASLALPGMSGFVA), 417 to 437 (VIVVFLMAVGVILTPIYLLSM), and 464 to 484 (VFVIACLLVPIIGIGFYPKLL).

The protein belongs to the complex I subunit 4 family.

Its subcellular location is the cellular thylakoid membrane. The enzyme catalyses a plastoquinone + NADH + (n+1) H(+)(in) = a plastoquinol + NAD(+) + n H(+)(out). It carries out the reaction a plastoquinone + NADPH + (n+1) H(+)(in) = a plastoquinol + NADP(+) + n H(+)(out). In terms of biological role, NDH-1 shuttles electrons from NAD(P)H, via FMN and iron-sulfur (Fe-S) centers, to quinones in the respiratory chain. The immediate electron acceptor for the enzyme in this species is believed to be plastoquinone. Couples the redox reaction to proton translocation (for every two electrons transferred, four hydrogen ions are translocated across the cytoplasmic membrane), and thus conserves the redox energy in a proton gradient. In Trichormus variabilis (strain ATCC 29413 / PCC 7937) (Anabaena variabilis), this protein is NAD(P)H-quinone oxidoreductase chain 4 1.